An 858-amino-acid polypeptide reads, in one-letter code: Leucine--tRNA ligase (858 aa).

The 'HIGH' region motif lies at 43–54 (PYPSGDGLHVGH). The 'KMSKS' region signature appears at 629-633 (KMSKS). Lys-632 serves as a coordination point for ATP.

Belongs to the class-I aminoacyl-tRNA synthetase family.

The protein localises to the cytoplasm. It catalyses the reaction tRNA(Leu) + L-leucine + ATP = L-leucyl-tRNA(Leu) + AMP + diphosphate. The chain is Leucine--tRNA ligase from Treponema denticola (strain ATCC 35405 / DSM 14222 / CIP 103919 / JCM 8153 / KCTC 15104).